The sequence spans 767 residues: 5-methyltetrahydropteroyltriglutamate--homocysteine methyltransferase (767 aa).

Residues 17–20 and K117 each bind 5-methyltetrahydropteroyltri-L-glutamate; that span reads RELK. L-homocysteine is bound by residues 441–443 and E494; that span reads IGS. Residues 441 to 443 and E494 contribute to the L-methionine site; that span reads IGS. 5-methyltetrahydropteroyltri-L-glutamate is bound by residues 525 to 526 and W571; that span reads RC. D609 lines the L-homocysteine pocket. D609 is an L-methionine binding site. Residue E615 coordinates 5-methyltetrahydropteroyltri-L-glutamate. Residues H652, C654, and E676 each coordinate Zn(2+). H705 functions as the Proton donor in the catalytic mechanism. C737 lines the Zn(2+) pocket.

The protein belongs to the vitamin-B12 independent methionine synthase family. Requires Zn(2+) as cofactor.

The catalysed reaction is 5-methyltetrahydropteroyltri-L-glutamate + L-homocysteine = tetrahydropteroyltri-L-glutamate + L-methionine. Its pathway is amino-acid biosynthesis; L-methionine biosynthesis via de novo pathway; L-methionine from L-homocysteine (MetE route): step 1/1. Its function is as follows. Catalyzes the transfer of a methyl group from 5-methyltetrahydrofolate to homocysteine resulting in methionine formation. This chain is 5-methyltetrahydropteroyltriglutamate--homocysteine methyltransferase, found in Bifidobacterium longum (strain NCC 2705).